A 475-amino-acid chain; its full sequence is Aspartyl/glutamyl-tRNA(Asn/Gln) amidotransferase subunit B (475 aa).

This sequence belongs to the GatB/GatE family. GatB subfamily. In terms of assembly, heterotrimer of A, B and C subunits.

It catalyses the reaction L-glutamyl-tRNA(Gln) + L-glutamine + ATP + H2O = L-glutaminyl-tRNA(Gln) + L-glutamate + ADP + phosphate + H(+). The enzyme catalyses L-aspartyl-tRNA(Asn) + L-glutamine + ATP + H2O = L-asparaginyl-tRNA(Asn) + L-glutamate + ADP + phosphate + 2 H(+). Its function is as follows. Allows the formation of correctly charged Asn-tRNA(Asn) or Gln-tRNA(Gln) through the transamidation of misacylated Asp-tRNA(Asn) or Glu-tRNA(Gln) in organisms which lack either or both of asparaginyl-tRNA or glutaminyl-tRNA synthetases. The reaction takes place in the presence of glutamine and ATP through an activated phospho-Asp-tRNA(Asn) or phospho-Glu-tRNA(Gln). This Bacillus cereus (strain G9842) protein is Aspartyl/glutamyl-tRNA(Asn/Gln) amidotransferase subunit B.